A 193-amino-acid polypeptide reads, in one-letter code: Phosphatidylglycerophosphatase and protein-tyrosine phosphatase 1 (193 aa).

The transit peptide at 1 to 31 (MAASAWLEAGLARVLFYPTLLYTVFRGRVRG) directs the protein to the mitochondrion. The Tyrosine-protein phosphatase domain maps to 37 to 188 (WYHRIDHTVL…LKEFHKEITA (152 aa)). The residue at position 85 (Lys85) is an N6-succinyllysine. The active-site Phosphocysteine intermediate is the Cys132.

It belongs to the protein-tyrosine phosphatase family. Non-receptor class dual specificity subfamily. Interacts with STYXL1; the interaction inhibits PTPMT1 catalytic activity. Predominantly expressed in testis. Expressed at lower level in heart, brain, spleen, lung, liver, skeletal muscle, kidney, bone marrow, eye, lymph node, smooth muscle, prostate, thymus, stomach and uterus.

Its subcellular location is the mitochondrion inner membrane. The enzyme catalyses a 1,2-diacyl-sn-glycero-3-phospho-(1'-sn-glycero-3'-phosphate) + H2O = a 1,2-diacyl-sn-glycero-3-phospho-(1'-sn-glycerol) + phosphate. It carries out the reaction O-phospho-L-tyrosyl-[protein] + H2O = L-tyrosyl-[protein] + phosphate. It catalyses the reaction O-phospho-L-seryl-[protein] + H2O = L-seryl-[protein] + phosphate. The catalysed reaction is O-phospho-L-threonyl-[protein] + H2O = L-threonyl-[protein] + phosphate. The enzyme catalyses 1,2-di-(9Z-octadecenoyl)-sn-glycero-3-phospho-(1'-sn-glycerol-3'-phosphate) + H2O = 1,2-di-(9Z-octadecenoyl)-sn-glycero-3-phospho-(1'-sn-glycerol) + phosphate. It carries out the reaction 1,2-dioctanoyl-sn-glycero-3-phospho-(1D-myo-inositol-5-phosphate) + H2O = 1,2-dioctanoyl-sn-glycero-3-phospho-(1D-myo-inositol) + phosphate. It catalyses the reaction a 1-acyl-2-hexanoyl-sn-glycero-3-phospho-(1D-myo-inositol-5-phosphate) + H2O = a 1-acyl-2-hexanoyl-sn-glycero-3-phospho-(1D-myo-inositol) + phosphate. The catalysed reaction is 1,2-dibutyryl-sn-glycero-3-phospho-(1D-myo-inositol-5-phosphate) + H2O = 1,2-dibutyryl-sn-glycero-3-phospho-(1D-myo-inositol) + phosphate. Its pathway is phospholipid metabolism; phosphatidylglycerol biosynthesis; phosphatidylglycerol from CDP-diacylglycerol: step 2/2. Lipid phosphatase which dephosphorylates phosphatidylglycerophosphate (PGP) to phosphatidylglycerol (PG). PGP is an essential intermediate in the biosynthetic pathway of cardiolipin, a mitochondrial-specific phospholipid regulating the membrane integrity and activities of the organelle. Has also been shown to display phosphatase activity toward phosphoprotein substrates, specifically mediates dephosphorylation of mitochondrial proteins, thereby playing an essential role in ATP production. Has probably a preference for proteins phosphorylated on Ser and/or Thr residues compared to proteins phosphorylated on Tyr residues. Probably involved in regulation of insulin secretion in pancreatic beta cells. May prevent intrinsic apoptosis, probably by regulating mitochondrial membrane integrity. The polypeptide is Phosphatidylglycerophosphatase and protein-tyrosine phosphatase 1 (Mus musculus (Mouse)).